A 356-amino-acid chain; its full sequence is UDP-N-acetylglucosamine--N-acetylmuramyl-(pentapeptide) pyrophosphoryl-undecaprenol N-acetylglucosamine transferase (356 aa).

Residues 11 to 13, Asn-117, Arg-160, Ser-188, and Gln-290 each bind UDP-N-acetyl-alpha-D-glucosamine; that span reads TGG.

Belongs to the glycosyltransferase 28 family. MurG subfamily.

It localises to the cell inner membrane. It catalyses the reaction di-trans,octa-cis-undecaprenyl diphospho-N-acetyl-alpha-D-muramoyl-L-alanyl-D-glutamyl-meso-2,6-diaminopimeloyl-D-alanyl-D-alanine + UDP-N-acetyl-alpha-D-glucosamine = di-trans,octa-cis-undecaprenyl diphospho-[N-acetyl-alpha-D-glucosaminyl-(1-&gt;4)]-N-acetyl-alpha-D-muramoyl-L-alanyl-D-glutamyl-meso-2,6-diaminopimeloyl-D-alanyl-D-alanine + UDP + H(+). It functions in the pathway cell wall biogenesis; peptidoglycan biosynthesis. Its function is as follows. Cell wall formation. Catalyzes the transfer of a GlcNAc subunit on undecaprenyl-pyrophosphoryl-MurNAc-pentapeptide (lipid intermediate I) to form undecaprenyl-pyrophosphoryl-MurNAc-(pentapeptide)GlcNAc (lipid intermediate II). The protein is UDP-N-acetylglucosamine--N-acetylmuramyl-(pentapeptide) pyrophosphoryl-undecaprenol N-acetylglucosamine transferase of Rickettsia bellii (strain RML369-C).